The chain runs to 105 residues: uncharacterized protein (105 aa).

A helical membrane pass occupies residues 25–47; the sequence is AHSVTLLFGIFRSSPFLLLFLLI. The segment at 54–89 is disordered; sequence GRGSQRMKKKRGRANPSENLRERADPTNGPAENGKK.

Its subcellular location is the membrane. This is an uncharacterized protein from Saccharomyces cerevisiae (strain ATCC 204508 / S288c) (Baker's yeast).